We begin with the raw amino-acid sequence, 319 residues long: Beta-ketoacyl-[acyl-carrier-protein] synthase III (319 aa).

Residues C115 and H246 contribute to the active site. The ACP-binding stretch occupies residues 247-251 (QANLR). The active site involves N276.

Belongs to the thiolase-like superfamily. FabH family. As to quaternary structure, homodimer.

The protein resides in the cytoplasm. It catalyses the reaction malonyl-[ACP] + acetyl-CoA + H(+) = 3-oxobutanoyl-[ACP] + CO2 + CoA. It participates in lipid metabolism; fatty acid biosynthesis. Its function is as follows. Catalyzes the condensation reaction of fatty acid synthesis by the addition to an acyl acceptor of two carbons from malonyl-ACP. Catalyzes the first condensation reaction which initiates fatty acid synthesis and may therefore play a role in governing the total rate of fatty acid production. Possesses both acetoacetyl-ACP synthase and acetyl transacylase activities. Its substrate specificity determines the biosynthesis of branched-chain and/or straight-chain of fatty acids. The sequence is that of Beta-ketoacyl-[acyl-carrier-protein] synthase III from Coxiella burnetii (strain RSA 493 / Nine Mile phase I).